Consider the following 95-residue polypeptide: Large ribosomal subunit protein uL23 (95 aa).

It belongs to the universal ribosomal protein uL23 family. Part of the 50S ribosomal subunit. Contacts protein L29, and trigger factor when it is bound to the ribosome.

In terms of biological role, one of the early assembly proteins it binds 23S rRNA. One of the proteins that surrounds the polypeptide exit tunnel on the outside of the ribosome. Forms the main docking site for trigger factor binding to the ribosome. This chain is Large ribosomal subunit protein uL23, found in Levilactobacillus brevis (strain ATCC 367 / BCRC 12310 / CIP 105137 / JCM 1170 / LMG 11437 / NCIMB 947 / NCTC 947) (Lactobacillus brevis).